Reading from the N-terminus, the 140-residue chain is Calcium-binding protein B (140 aa).

2 consecutive EF-hand domains span residues 38–73 and 74–109; these read ATLS…INQP and KTYL…KTSS. Ca(2+) contacts are provided by Asp-51, Asn-53, Ser-55, Asp-57, and Glu-62.

This is Calcium-binding protein B (cbpB) from Dictyostelium discoideum (Social amoeba).